The sequence spans 566 residues: MQPIISFEQFNFQYKHAAQPTVKDITFHIYPGEKVLIAGRSGSGKSTLAHCMNGLIPFSYEGISTGNILIAGKDPRKKSVFELSKHVGTILQDQDAQFIGLTVEEDVAFYLENECVNQDEMKKIVSESLKKVGMHTFHKQSPHELSGGQKQTVSLAGLLTTNAPMLLFDEPLANLDPASSLHTIELIKNIHKQYNKTIVIIEHRIEEMLNLDLDKIILIDEGEIVAIDTPERILASNILPSIGLREPMYIEGLKRLHFDSNNDVIYPLENLHKESISGVIKEWMEKKAFCKDTPTKKELLKVENLSFSYPNKQKALENVNLSIYEGEIVALLGHNGAGKSTLAHSLIGINKTKNSRILIDGVNINSWSIRKRGEIISYVMQNPNHMITQSTVIEEVSFTLKLKKVSKEEIKFRAEEALKICGLYPFRNWPIQALSYGQKKRLTIASVLTANPKLIILDEPTAGQDYYHYKQFMSFIRKLAKKGISFIFITHDMNLALEYADRAIVLHEGRIIANHTASIVLGHPATLQRANLKESSLFKLVKFSGIANPGKFMELYFDDIRREEGV.

ABC transporter domains are found at residues 5 to 246 and 300 to 533; these read ISFE…GLRE and LKVE…ANLK. ATP-binding positions include 39-46 and 333-340; these read GRSGSGKS and GHNGAGKS.

The protein belongs to the ABC transporter superfamily.

It localises to the cell membrane. Probably part of an ABC transporter complex. Responsible for energy coupling to the transport system. The polypeptide is Putative ABC transporter ATP-binding protein BA_2641/GBAA_2641/BAS2461 (Bacillus anthracis).